A 406-amino-acid polypeptide reads, in one-letter code: Argininosuccinate synthase (406 aa).

ATP-binding positions include 11–19 (AYSGGLDTS) and A38. Y91 and S96 together coordinate L-citrulline. G121 serves as a coordination point for ATP. L-aspartate is bound by residues T123, N127, and D128. N127 is an L-citrulline binding site. 5 residues coordinate L-citrulline: R131, S181, S190, E266, and Y278.

Belongs to the argininosuccinate synthase family. Type 1 subfamily. As to quaternary structure, homotetramer.

The protein localises to the cytoplasm. The enzyme catalyses L-citrulline + L-aspartate + ATP = 2-(N(omega)-L-arginino)succinate + AMP + diphosphate + H(+). Its pathway is amino-acid biosynthesis; L-arginine biosynthesis; L-arginine from L-ornithine and carbamoyl phosphate: step 2/3. In Campylobacter hominis (strain ATCC BAA-381 / DSM 21671 / CCUG 45161 / LMG 19568 / NCTC 13146 / CH001A), this protein is Argininosuccinate synthase.